The following is a 258-amino-acid chain: Exu regulon transcriptional regulator (258 aa).

An HTH gntR-type domain is found at arginine 7–asparagine 75. Positions glutamate 35–isoleucine 54 form a DNA-binding region, H-T-H motif.

Its function is as follows. Repressor for the exu regulon that encode genes involved in hexuronate utilization. It regulates the ExuT, UxaCA and UxuRAB operons. Binds D-tagaturonate and D-fructuronate as inducers. This chain is Exu regulon transcriptional regulator (exuR), found in Escherichia coli O157:H7.